A 612-amino-acid polypeptide reads, in one-letter code: Cytoplasmic dynein 1 intermediate chain 2 (612 aa).

Composition is skewed to basic and acidic residues over residues 1–13 and 20–43; these read MSDK…ELER and QIRE…KKEA. Disordered stretches follow at residues 1–117 and 129–188; these read MSDK…MAKI and TYTK…EEKQ. Position 2 is an N-acetylserine (Ser2). Ser51 carries the diphosphoserine modification. 2 positions are modified to phosphoserine: Ser51 and Ser84. A compositionally biased stretch (low complexity) spans 82-91; the sequence is PSSKSVSTPS. Residue Thr89 is modified to Phosphothreonine. 3 positions are modified to phosphoserine: Ser91, Ser95, and Ser98. Over residues 164–188 the composition is skewed to basic and acidic residues; the sequence is EKTLKKDEESDSKAPPHELTEEEKQ. 7 WD repeats span residues 251–300, 304–344, 353–394, 403–443, 448–493, 496–536, and 542–581; these read SKHR…TTPE, HCQS…RTPV, AHTH…HPQD, SKAV…AGIS, GHQG…PLYS, DNSD…EVPT, and EGNP…AVPR.

Belongs to the dynein intermediate chain family. In terms of assembly, homodimer. The cytoplasmic dynein 1 complex consists of two catalytic heavy chains (HCs) and a number of non-catalytic subunits presented by intermediate chains (ICs), light intermediate chains (LICs) and light chains (LCs); the composition seems to vary in respect to the IC, LIC and LC composition. The heavy chain homodimer serves as a scaffold for the probable homodimeric assembly of the respective non-catalytic subunits. The ICs and LICs bind directly to the HC dimer and the LCs assemble on the IC dimer. Interacts with DYNLT3. Interacts with DYNLT1. Interacts (dephosphorylated at Ser-84) with DCTN1. Interacts with BICD2. Interacts with SPEF2. Interacts with CFAP61. Post-translationally, the phosphorylation status of Ser-84 appears to be involved in dynactin-dependent target binding. In terms of processing, pyrophosphorylation by 5-diphosphoinositol pentakisphosphate (5-IP7) promotes interaction with DCTN1. Serine pyrophosphorylation is achieved by Mg(2+)-dependent, but enzyme independent transfer of a beta-phosphate from a inositol pyrophosphate to a pre-phosphorylated serine residue.

The protein localises to the cytoplasm. It localises to the cytoskeleton. Its function is as follows. Acts as one of several non-catalytic accessory components of the cytoplasmic dynein 1 complex that are thought to be involved in linking dynein to cargos and to adapter proteins that regulate dynein function. Cytoplasmic dynein 1 acts as a motor for the intracellular retrograde motility of vesicles and organelles along microtubules. The intermediate chains mediate the binding of dynein to dynactin via its 150 kDa component (p150-glued) DCTN1. Involved in membrane-transport, such as Golgi apparatus, late endosomes and lysosomes. The polypeptide is Cytoplasmic dynein 1 intermediate chain 2 (DYNC1I2) (Bos taurus (Bovine)).